Consider the following 491-residue polypeptide: Nuatigenin 3-beta-glucosyltransferase (491 aa).

H20 functions as the Proton acceptor in the catalytic mechanism. Position 20 (H20) interacts with an anthocyanidin. D125 (charge relay) is an active-site residue. UDP-alpha-D-glucose contacts are provided by A352, Q354, H369, W372, N373, S374, and E377. A392 is an an anthocyanidin binding site. Residues E393 and Q394 each contribute to the UDP-alpha-D-glucose site.

It belongs to the UDP-glycosyltransferase family. In terms of tissue distribution, expressed in roots, stems and leaves.

The catalysed reaction is nuatigenin + UDP-alpha-D-glucose = nuatigenin 3-beta-D-glucopyranoside + UDP + H(+). It carries out the reaction diosgenin + UDP-alpha-D-glucose = diosgenin 3-O-beta-D-glucoside + UDP + H(+). It catalyses the reaction tigogenin + UDP-alpha-D-glucose = tigogenin 3-O-beta-D-glucopyranoside + UDP + H(+). The enzyme catalyses solasodine + UDP-alpha-D-glucose = solasodine 3-beta-D-glucoside + UDP + H(+). The catalysed reaction is solanidine + UDP-alpha-D-glucose = solanidine 3-O-beta-D-glucopyranoside + UDP + H(+). It carries out the reaction tomatidine + UDP-alpha-D-glucose = tomatidine 3-O-beta-D-glucopyranoside + UDP + H(+). Functionally, glucosyltransferase involved in steroid saponin biosynthesis. Catalyzes the 3-O-glucosylation of steroidal sapogenins, such as diosgenin, nuatigenin and tigogenin. Can glucosylate steroidal alkaloids, such as solanidine, solasodine and tomatidine. This chain is Nuatigenin 3-beta-glucosyltransferase, found in Solanum aculeatissimum (Dutch eggplant).